A 179-amino-acid chain; its full sequence is Large ribosomal subunit protein uL5 (179 aa).

Belongs to the universal ribosomal protein uL5 family. Part of the 50S ribosomal subunit; part of the 5S rRNA/L5/L18/L25 subcomplex. Contacts the 5S rRNA and the P site tRNA. Forms a bridge to the 30S subunit in the 70S ribosome.

Functionally, this is one of the proteins that bind and probably mediate the attachment of the 5S RNA into the large ribosomal subunit, where it forms part of the central protuberance. In the 70S ribosome it contacts protein S13 of the 30S subunit (bridge B1b), connecting the 2 subunits; this bridge is implicated in subunit movement. Contacts the P site tRNA; the 5S rRNA and some of its associated proteins might help stabilize positioning of ribosome-bound tRNAs. The chain is Large ribosomal subunit protein uL5 from Clostridium perfringens (strain ATCC 13124 / DSM 756 / JCM 1290 / NCIMB 6125 / NCTC 8237 / Type A).